The following is a 172-amino-acid chain: Small integral membrane protein 23 (172 aa).

Over 1 to 36 (MATQQVDSRRQVAAEQVAAQLLERRRGSHCDDEKQT) the chain is Cytoplasmic. The chain crosses the membrane as a helical; Signal-anchor for type II membrane protein span at residues 37 to 53 (LLALLILVLYLSTEIWG). Over 54 to 172 (SSWEVSERIR…LEISLSGAEL (119 aa)) the chain is Extracellular. The stretch at 96-128 (LKEKLHVFSEKLEEEVQQLEQLAWDLELWLDAL) forms a coiled coil.

Its subcellular location is the cell membrane. The sequence is that of Small integral membrane protein 23 (SMIM23) from Homo sapiens (Human).